The primary structure comprises 252 residues: 5'-nucleotidase SurE (252 aa).

The a divalent metal cation site is built by aspartate 8, aspartate 9, serine 42, and asparagine 94.

Belongs to the SurE nucleotidase family. It depends on a divalent metal cation as a cofactor.

The protein resides in the cytoplasm. The enzyme catalyses a ribonucleoside 5'-phosphate + H2O = a ribonucleoside + phosphate. Functionally, nucleotidase that shows phosphatase activity on nucleoside 5'-monophosphates. The chain is 5'-nucleotidase SurE from Ehrlichia ruminantium (strain Gardel).